We begin with the raw amino-acid sequence, 456 residues long: Gamma-aminobutyric acid receptor subunit alpha-1 (456 aa).

The N-terminal stretch at 1-27 (MRKSPGLSDYLWAWILLLSTLTGRSYG) is a signal peptide. Over 28–253 (QPSLQDELKD…FHLKRKIGYF (226 aa)) the chain is Extracellular. The N-linked (GlcNAc...) asparagine glycan is linked to asparagine 38. Arginine 94 serves as a coordination point for 4-aminobutanoate. A glycan (N-linked (GlcNAc...) asparagine) is linked at asparagine 138. Position 157 (threonine 157) interacts with 4-aminobutanoate. Cysteine 166 and cysteine 180 are oxidised to a cystine. The helical transmembrane segment at 254 to 274 (VIQTYLPCIMTVILSQVSFWL) threads the bilayer. Residues 275 to 279 (NRESV) are Cytoplasmic-facing. A helical membrane pass occupies residues 280–301 (PARTVFGVTTVLTMTTLSISAR). The Extracellular portion of the chain corresponds to 302-311 (NSLPKVAYAT). A helical membrane pass occupies residues 312 to 333 (AMDWFIAVCYAFVFSALIEFAT). The Cytoplasmic portion of the chain corresponds to 334–421 (VNYFTKRGYA…TFNSVSKIDR (88 aa)). Residues 422–441 (LSRIAFPLLFGIFNLVYWAT) traverse the membrane as a helical segment. The Extracellular portion of the chain corresponds to 442 to 456 (YLNREPQLKAPTPHQ).

The protein belongs to the ligand-gated ion channel (TC 1.A.9) family. Gamma-aminobutyric acid receptor (TC 1.A.9.5) subfamily. GABRA1 sub-subfamily. Heteropentamer, formed by a combination of alpha (GABRA1-6), beta (GABRB1-3), gamma (GABRG1-3), delta (GABRD), epsilon (GABRE), rho (GABRR1-3), pi (GABRP) and theta (GABRQ) subunits, each subunit exhibiting distinct physiological and pharmacological properties. Interacts with UBQLN1. Interacts with TRAK1. Interacts with KIF21B. Identified in a complex of 720 kDa composed of LHFPL4, NLGN2, GABRA1, GABRB2, GABRG2 and GABRB3. Interacts with LHFPL4. Interacts with NLGN2. Interacts with SHISA7; interaction leads to the regulation of GABA(A) receptor trafficking, channel deactivation kinetics and pharmacology.

The protein localises to the postsynaptic cell membrane. It localises to the cell membrane. The protein resides in the cytoplasmic vesicle membrane. It carries out the reaction chloride(in) = chloride(out). With respect to regulation, allosterically activated by benzodiazepines, the neuroanesthetic alphaxalone and pentobarbital. Inhibited by the antagonist bicuculline. Potentiated by histamine. In terms of biological role, alpha subunit of the heteropentameric ligand-gated chloride channel gated by gamma-aminobutyric acid (GABA), a major inhibitory neurotransmitter in the brain. GABA-gated chloride channels, also named GABA(A) receptors (GABAAR), consist of five subunits arranged around a central pore and contain GABA active binding site(s) located at the alpha and beta subunit interface(s). When activated by GABA, GABAARs selectively allow the flow of chloride anions across the cell membrane down their electrochemical gradient. Alpha-1/GABRA1-containing GABAARs are largely synaptic. Chloride influx into the postsynaptic neuron following GABAAR opening decreases the neuron ability to generate a new action potential, thereby reducing nerve transmission. GABAARs containing alpha-1 and beta-2 or -3 subunits exhibit synaptogenic activity; the gamma-2 subunit being necessary but not sufficient to induce rapid synaptic contacts formation. GABAARs function also as histamine receptor where histamine binds at the interface of two neighboring beta subunits and potentiates GABA response. GABAARs containing alpha, beta and epsilon subunits also permit spontaneous chloride channel activity while preserving the structural information required for GABA-gated openings. Alpha-1-mediated plasticity in the orbitofrontal cortex regulates context-dependent action selection. Together with rho subunits, may also control neuronal and glial GABAergic transmission in the cerebellum. This Macaca fascicularis (Crab-eating macaque) protein is Gamma-aminobutyric acid receptor subunit alpha-1 (GABRA1).